A 122-amino-acid polypeptide reads, in one-letter code: Large ribosomal subunit protein uL14c (122 aa).

This sequence belongs to the universal ribosomal protein uL14 family. As to quaternary structure, part of the 50S ribosomal subunit.

It localises to the plastid. Its subcellular location is the chloroplast. Its function is as follows. Binds to 23S rRNA. The protein is Large ribosomal subunit protein uL14c of Mesostigma viride (Green alga).